A 215-amino-acid chain; its full sequence is LysM and putative peptidoglycan-binding domain-containing protein 1 (215 aa).

Positions 37–81 constitute a LysM domain; that stretch reads LEHQVQPGDTLQGLALRYGVSMEQIKRANRLYTNDSIFLKKSLYI. Polar residues-rich tracts occupy residues 86-103 and 173-189; these read GQSDLSDDQNSQEGSETE and GNRTPSRQNSPQTQQRS. Disordered stretches follow at residues 86–133 and 148–203; these read GQSD…PVDF and AVKK…TRAS.

This Xenopus laevis (African clawed frog) protein is LysM and putative peptidoglycan-binding domain-containing protein 1 (lysmd1).